The following is a 740-amino-acid chain: Eukaryotic translation initiation factor 3 subunit B (740 aa).

The span at 1–10 (MAPSFDTLSE) shows a compositional bias: polar residues. The interval 1–20 (MAPSFDTLSEQDLHEEEEEE) is disordered. Residues 40 to 126 (TFVVIDGLPV…HTLLVNKLMD (87 aa)) form the RRM domain. WD repeat units follow at residues 193–230 (AHWT…KQKQ), 232–289 (PHPF…RSFV), 302–343 (EPKK…LLGK), 455–496 (SLKD…SFFA), 513–556 (IEKK…EKPE), and 571–609 (IEHY…HTFA). The interval 695–721 (DAYGLPEEADDPKLAKDAAATTQEQGE) is disordered.

The protein belongs to the eIF-3 subunit B family. As to quaternary structure, component of the eukaryotic translation initiation factor 3 (eIF-3) complex.

The protein resides in the cytoplasm. Functionally, RNA-binding component of the eukaryotic translation initiation factor 3 (eIF-3) complex, which is involved in protein synthesis of a specialized repertoire of mRNAs and, together with other initiation factors, stimulates binding of mRNA and methionyl-tRNAi to the 40S ribosome. The eIF-3 complex specifically targets and initiates translation of a subset of mRNAs involved in cell proliferation. The polypeptide is Eukaryotic translation initiation factor 3 subunit B (prt1) (Neosartorya fischeri (strain ATCC 1020 / DSM 3700 / CBS 544.65 / FGSC A1164 / JCM 1740 / NRRL 181 / WB 181) (Aspergillus fischerianus)).